Reading from the N-terminus, the 520-residue chain is Bifunctional purine biosynthesis protein PurH (520 aa).

The region spanning 1 to 147 is the MGS-like domain; sequence MAKIGRALIS…KNNRDVTVVV (147 aa).

This sequence belongs to the PurH family.

The enzyme catalyses (6R)-10-formyltetrahydrofolate + 5-amino-1-(5-phospho-beta-D-ribosyl)imidazole-4-carboxamide = 5-formamido-1-(5-phospho-D-ribosyl)imidazole-4-carboxamide + (6S)-5,6,7,8-tetrahydrofolate. It catalyses the reaction IMP + H2O = 5-formamido-1-(5-phospho-D-ribosyl)imidazole-4-carboxamide. It participates in purine metabolism; IMP biosynthesis via de novo pathway; 5-formamido-1-(5-phospho-D-ribosyl)imidazole-4-carboxamide from 5-amino-1-(5-phospho-D-ribosyl)imidazole-4-carboxamide (10-formyl THF route): step 1/1. Its pathway is purine metabolism; IMP biosynthesis via de novo pathway; IMP from 5-formamido-1-(5-phospho-D-ribosyl)imidazole-4-carboxamide: step 1/1. This chain is Bifunctional purine biosynthesis protein PurH, found in Citrifermentans bemidjiense (strain ATCC BAA-1014 / DSM 16622 / JCM 12645 / Bem) (Geobacter bemidjiensis).